Reading from the N-terminus, the 329-residue chain is uncharacterized protein (329 aa).

2 coiled-coil regions span residues 57-120 (KKEE…QEVT) and 225-251 (QRQR…GNMM).

This is an uncharacterized protein from Homo sapiens (Human).